The primary structure comprises 557 residues: Transmembrane protein 209 (557 aa).

A helical transmembrane segment spans residues Val28–Thr48. The N-linked (GlcNAc...) asparagine glycan is linked to Asn57. The chain crosses the membrane as a helical span at residues Tyr60 to Phe80. Disordered stretches follow at residues Pro108–Pro156 and Tyr194–Glu232. Positions Val125–Leu140 are enriched in polar residues. Composition is skewed to low complexity over residues Ser141–Pro156, Tyr194–Ser205, and Arg219–Pro228. N-linked (GlcNAc...) asparagine glycans are attached at residues Asn273 and Asn343.

The protein localises to the membrane. It is found in the nucleus envelope. Its subcellular location is the golgi apparatus. The protein resides in the cytoplasm. This Xenopus tropicalis (Western clawed frog) protein is Transmembrane protein 209 (tmem209).